Here is a 115-residue protein sequence, read N- to C-terminus: Small ribosomal subunit protein bS18c (115 aa).

The segment at 91 to 115 (TNALKARTQNKDQKKEKFQINKKKK) is disordered. The segment covering 99–109 (QNKDQKKEKFQ) has biased composition (basic and acidic residues).

The protein belongs to the bacterial ribosomal protein bS18 family. As to quaternary structure, part of the 30S ribosomal subunit.

It localises to the plastid. It is found in the chloroplast. The sequence is that of Small ribosomal subunit protein bS18c from Ipomoea purpurea (Common morning glory).